Reading from the N-terminus, the 325-residue chain is 2-dehydro-3-deoxygluconokinase (325 aa).

Residues 49 to 53 (GSEAN), Tyr-105, 121 to 123 (YYR), and Arg-181 each bind substrate. Residues 179–181 (NIR), 240–245 (KLGAEG), and 269–272 (GAGD) contribute to the ATP site. Asp-272 and Asp-308 together coordinate substrate. Residue Asp-272 is the Proton acceptor of the active site.

This sequence belongs to the carbohydrate kinase PfkB family. As to quaternary structure, homohexamer; trimer of dimers.

It catalyses the reaction 2-dehydro-3-deoxy-D-gluconate + ATP = 2-dehydro-3-deoxy-6-phospho-D-gluconate + ADP + H(+). Its pathway is carbohydrate acid metabolism; 2-dehydro-3-deoxy-D-gluconate degradation; D-glyceraldehyde 3-phosphate and pyruvate from 2-dehydro-3-deoxy-D-gluconate: step 1/2. Functionally, involved in the degradation of glucose via the semi-phosphorylative Entner-Doudoroff pathway. Catalyzes the phosphorylation of 2-keto-3-deoxygluconate (KDG) yielding 2-keto-3-deoxy-6-phosphogluconate (KDPG). This is 2-dehydro-3-deoxygluconokinase (kdgK) from Thermoproteus tenax.